A 129-amino-acid chain; its full sequence is Small ribosomal subunit protein uS11 (129 aa).

This sequence belongs to the universal ribosomal protein uS11 family. Part of the 30S ribosomal subunit. Interacts with proteins S7 and S18. Binds to IF-3.

Located on the platform of the 30S subunit, it bridges several disparate RNA helices of the 16S rRNA. Forms part of the Shine-Dalgarno cleft in the 70S ribosome. The protein is Small ribosomal subunit protein uS11 of Phocaeicola vulgatus (strain ATCC 8482 / DSM 1447 / JCM 5826 / CCUG 4940 / NBRC 14291 / NCTC 11154) (Bacteroides vulgatus).